Here is a 143-residue protein sequence, read N- to C-terminus: Nucleoside diphosphate kinase (143 aa).

6 residues coordinate ATP: Lys11, Phe59, Arg87, Thr93, Arg104, and Asn114. Catalysis depends on His117, which acts as the Pros-phosphohistidine intermediate.

This sequence belongs to the NDK family. Homotetramer. Requires Mg(2+) as cofactor.

It localises to the cytoplasm. The enzyme catalyses a 2'-deoxyribonucleoside 5'-diphosphate + ATP = a 2'-deoxyribonucleoside 5'-triphosphate + ADP. It catalyses the reaction a ribonucleoside 5'-diphosphate + ATP = a ribonucleoside 5'-triphosphate + ADP. In terms of biological role, major role in the synthesis of nucleoside triphosphates other than ATP. The ATP gamma phosphate is transferred to the NDP beta phosphate via a ping-pong mechanism, using a phosphorylated active-site intermediate. In Alteromonas mediterranea (strain DSM 17117 / CIP 110805 / LMG 28347 / Deep ecotype), this protein is Nucleoside diphosphate kinase.